The chain runs to 542 residues: Chaperonin GroEL 2 (542 aa).

ATP contacts are provided by residues 30-33 (TLGP), Lys51, 87-91 (DGTTT), Gly415, and Asp496.

This sequence belongs to the chaperonin (HSP60) family. Forms a cylinder of 14 subunits composed of two heptameric rings stacked back-to-back. Interacts with the co-chaperonin GroES.

The protein resides in the cytoplasm. The enzyme catalyses ATP + H2O + a folded polypeptide = ADP + phosphate + an unfolded polypeptide.. Together with its co-chaperonin GroES, plays an essential role in assisting protein folding. The GroEL-GroES system forms a nano-cage that allows encapsulation of the non-native substrate proteins and provides a physical environment optimized to promote and accelerate protein folding. The sequence is that of Chaperonin GroEL 2 from Cereibacter sphaeroides (strain ATCC 17023 / DSM 158 / JCM 6121 / CCUG 31486 / LMG 2827 / NBRC 12203 / NCIMB 8253 / ATH 2.4.1.) (Rhodobacter sphaeroides).